A 246-amino-acid chain; its full sequence is Sensory transduction protein LytT (246 aa).

One can recognise a Response regulatory domain in the interval Lys3 to Lys117. Asp54 bears the 4-aspartylphosphate mark. An HTH LytTR-type domain is found at Leu142–Ile246.

In terms of processing, phosphorylated by LytS.

The protein resides in the cytoplasm. Functionally, member of the two-component regulatory system LytS/LytT that probably regulates genes involved in cell wall metabolism. This is Sensory transduction protein LytT (lytT) from Bacillus anthracis.